We begin with the raw amino-acid sequence, 443 residues long: ATP-dependent protease ATPase subunit HslU (443 aa).

Residues Ile-19 and 61–66 (GVGKTE) each bind ATP. Positions 139-158 (PPRDIGFSQPEEKDSNTRQV) are disordered. The ATP site is built by Asp-256, Glu-321, and Arg-393.

The protein belongs to the ClpX chaperone family. HslU subfamily. A double ring-shaped homohexamer of HslV is capped on each side by a ring-shaped HslU homohexamer. The assembly of the HslU/HslV complex is dependent on binding of ATP.

It localises to the cytoplasm. ATPase subunit of a proteasome-like degradation complex; this subunit has chaperone activity. The binding of ATP and its subsequent hydrolysis by HslU are essential for unfolding of protein substrates subsequently hydrolyzed by HslV. HslU recognizes the N-terminal part of its protein substrates and unfolds these before they are guided to HslV for hydrolysis. The chain is ATP-dependent protease ATPase subunit HslU from Cupriavidus taiwanensis (strain DSM 17343 / BCRC 17206 / CCUG 44338 / CIP 107171 / LMG 19424 / R1) (Ralstonia taiwanensis (strain LMG 19424)).